The chain runs to 233 residues: Octanoyltransferase (233 aa).

The 181-residue stretch at 38 to 218 (AGGPDTLLLL…LVCDALDGVL (181 aa)) folds into the BPL/LPL catalytic domain. Positions 57-66 (RRTEPHERPL) are enriched in basic and acidic residues. The tract at residues 57–77 (RRTEPHERPLDGTPVVDTDRG) is disordered. Substrate contacts are provided by residues 76–83 (RGGKITWH), 148–150 (AIG), and 161–163 (GFA). Cysteine 179 serves as the catalytic Acyl-thioester intermediate.

This sequence belongs to the LipB family.

The protein resides in the cytoplasm. It carries out the reaction octanoyl-[ACP] + L-lysyl-[protein] = N(6)-octanoyl-L-lysyl-[protein] + holo-[ACP] + H(+). The protein operates within protein modification; protein lipoylation via endogenous pathway; protein N(6)-(lipoyl)lysine from octanoyl-[acyl-carrier-protein]: step 1/2. Catalyzes the transfer of endogenously produced octanoic acid from octanoyl-acyl-carrier-protein onto the lipoyl domains of lipoate-dependent enzymes. Lipoyl-ACP can also act as a substrate although octanoyl-ACP is likely to be the physiological substrate. This chain is Octanoyltransferase, found in Mycobacterium avium (strain 104).